Reading from the N-terminus, the 222-residue chain is Superoxide dismutase [Cu-Zn], chloroplastic (222 aa).

The N-terminal 68 residues, M1–A68, are a transit peptide targeting the chloroplast. Residues H114, H116, and H131 each coordinate Cu cation. C125 and C214 are disulfide-bonded. The Zn(2+) site is built by H131, H139, H148, and D151. Cu cation is bound at residue H188.

It belongs to the Cu-Zn superoxide dismutase family. In terms of assembly, homotetramer. Requires Cu cation as cofactor. Zn(2+) is required as a cofactor.

It is found in the plastid. The protein localises to the chloroplast. The catalysed reaction is 2 superoxide + 2 H(+) = H2O2 + O2. In terms of biological role, destroys radicals which are normally produced within the cells and which are toxic to biological systems. The sequence is that of Superoxide dismutase [Cu-Zn], chloroplastic (SODCP) from Spinacia oleracea (Spinach).